The following is a 483-amino-acid chain: MKVLIVSSELSPIAKEGGLGDAMAGLAPALDALGCEVKVAIPGYGHVLESCPGAELITENVRVSMGYFNMTADLRKVEPAPGVEAYMVCNESLFGRHGVYGDNDGLFMDNHKRYIFFSKSIPALCSASRYIPDVILANDWQTGLIPALMDQGHMPQTASVFVIHNIGYLGYVPPEDASMLGLSNTYLSYEGMEFYGQLSLLKAGIAYANKLVTVSPTYSREIQTTEQGAGLDGLMRKRSQDLAGILNGVDFQVWSPETDKHIPCNYSTADMAGKGKCKKALLDEMGMDSQLMNAPVAGMVTRLFSQKGIELVIGAVPEIVENGMGFILLGNGEESYVRDLRRLAQAYPGRFRFEEAFNEPLAHRIMAGADMLCVPSLYEPCGLTQMYALQYGTIPVARATGGLADTVRDIKAFAGKGNGFTFDAFSPGAFANAMDRAGRHYKNRKAWSALRTKAMASAGVFTWDMAAEQYYSIFERAVRARRL.

Lys15 lines the ADP-alpha-D-glucose pocket.

The protein belongs to the glycosyltransferase 1 family. Bacterial/plant glycogen synthase subfamily.

The catalysed reaction is [(1-&gt;4)-alpha-D-glucosyl](n) + ADP-alpha-D-glucose = [(1-&gt;4)-alpha-D-glucosyl](n+1) + ADP + H(+). It functions in the pathway glycan biosynthesis; glycogen biosynthesis. Its function is as follows. Synthesizes alpha-1,4-glucan chains using ADP-glucose. The polypeptide is Glycogen synthase (Desulfatibacillum aliphaticivorans).